Consider the following 98-residue polypeptide: NADH-ubiquinone oxidoreductase chain 4L (98 aa).

Transmembrane regions (helical) follow at residues 1 to 21, 29 to 49, and 61 to 81; these read MTMV…GLLM, SLLC…VTIL, and IILL…LVMV.

It belongs to the complex I subunit 4L family. As to quaternary structure, core subunit of respiratory chain NADH dehydrogenase (Complex I) which is composed of 45 different subunits.

It is found in the mitochondrion inner membrane. The enzyme catalyses a ubiquinone + NADH + 5 H(+)(in) = a ubiquinol + NAD(+) + 4 H(+)(out). Core subunit of the mitochondrial membrane respiratory chain NADH dehydrogenase (Complex I) which catalyzes electron transfer from NADH through the respiratory chain, using ubiquinone as an electron acceptor. Part of the enzyme membrane arm which is embedded in the lipid bilayer and involved in proton translocation. The sequence is that of NADH-ubiquinone oxidoreductase chain 4L (MT-ND4L) from Mirounga angustirostris (Northern elephant seal).